We begin with the raw amino-acid sequence, 449 residues long: Exodeoxyribonuclease 7 large subunit (449 aa).

It belongs to the XseA family. Heterooligomer composed of large and small subunits.

It is found in the cytoplasm. It carries out the reaction Exonucleolytic cleavage in either 5'- to 3'- or 3'- to 5'-direction to yield nucleoside 5'-phosphates.. Functionally, bidirectionally degrades single-stranded DNA into large acid-insoluble oligonucleotides, which are then degraded further into small acid-soluble oligonucleotides. The sequence is that of Exodeoxyribonuclease 7 large subunit from Salmonella dublin (strain CT_02021853).